The chain runs to 2296 residues: Protein Ycf2 (2296 aa).

1650–1657 (GSIGIGRS) provides a ligand contact to ATP.

This sequence belongs to the Ycf2 family.

It is found in the plastid. It localises to the chloroplast stroma. Its function is as follows. Probable ATPase of unknown function. Its presence in a non-photosynthetic plant (Epifagus virginiana) and experiments in tobacco indicate that it has an essential function which is probably not related to photosynthesis. The sequence is that of Protein Ycf2 from Arabis hirsuta (Hairy rock-cress).